Reading from the N-terminus, the 260-residue chain is Adenosylcobinamide-GDP ribazoletransferase (260 aa).

6 consecutive transmembrane segments (helical) span residues 40–60 (AFPF…LLLL), 64–84 (ADPL…TGAL), 117–137 (YGAI…AAIV), 142–162 (PLAA…AITW), 189–209 (FALV…FGLW), and 210–230 (PLVA…VFIR).

This sequence belongs to the CobS family. Mg(2+) serves as cofactor.

It localises to the cell inner membrane. It carries out the reaction alpha-ribazole + adenosylcob(III)inamide-GDP = adenosylcob(III)alamin + GMP + H(+). It catalyses the reaction alpha-ribazole 5'-phosphate + adenosylcob(III)inamide-GDP = adenosylcob(III)alamin 5'-phosphate + GMP + H(+). It functions in the pathway cofactor biosynthesis; adenosylcobalamin biosynthesis; adenosylcobalamin from cob(II)yrinate a,c-diamide: step 7/7. Its function is as follows. Joins adenosylcobinamide-GDP and alpha-ribazole to generate adenosylcobalamin (Ado-cobalamin). Also synthesizes adenosylcobalamin 5'-phosphate from adenosylcobinamide-GDP and alpha-ribazole 5'-phosphate. The protein is Adenosylcobinamide-GDP ribazoletransferase of Rhizobium etli (strain CIAT 652).